Here is a 473-residue protein sequence, read N- to C-terminus: Aspartyl/glutamyl-tRNA(Asn/Gln) amidotransferase subunit B (473 aa).

It belongs to the GatB/GatE family. GatB subfamily. As to quaternary structure, heterotrimer of A, B and C subunits.

It catalyses the reaction L-glutamyl-tRNA(Gln) + L-glutamine + ATP + H2O = L-glutaminyl-tRNA(Gln) + L-glutamate + ADP + phosphate + H(+). The catalysed reaction is L-aspartyl-tRNA(Asn) + L-glutamine + ATP + H2O = L-asparaginyl-tRNA(Asn) + L-glutamate + ADP + phosphate + 2 H(+). Functionally, allows the formation of correctly charged Asn-tRNA(Asn) or Gln-tRNA(Gln) through the transamidation of misacylated Asp-tRNA(Asn) or Glu-tRNA(Gln) in organisms which lack either or both of asparaginyl-tRNA or glutaminyl-tRNA synthetases. The reaction takes place in the presence of glutamine and ATP through an activated phospho-Asp-tRNA(Asn) or phospho-Glu-tRNA(Gln). The protein is Aspartyl/glutamyl-tRNA(Asn/Gln) amidotransferase subunit B of Francisella tularensis subsp. tularensis (strain FSC 198).